A 262-amino-acid chain; its full sequence is Type II pantothenate kinase (262 aa).

Asp7–Lys14 is a binding site for ATP. Glu71 acts as the Proton acceptor in catalysis. ATP is bound by residues Thr101, Gly119–Thr123, and Tyr135.

Belongs to the type II pantothenate kinase family. Homodimer.

It localises to the cytoplasm. The catalysed reaction is (R)-pantothenate + ATP = (R)-4'-phosphopantothenate + ADP + H(+). It participates in cofactor biosynthesis; coenzyme A biosynthesis; CoA from (R)-pantothenate: step 1/5. Its function is as follows. Catalyzes the phosphorylation of pantothenate (Pan), the first step in CoA biosynthesis. The chain is Type II pantothenate kinase from Oceanobacillus iheyensis (strain DSM 14371 / CIP 107618 / JCM 11309 / KCTC 3954 / HTE831).